The primary structure comprises 256 residues: CCAAT/enhancer-binding protein delta (256 aa).

At serine 2 the chain carries N-acetylserine. Disordered regions lie at residues 18 to 40, 92 to 121, and 139 to 206; these read TAEP…AEPA, GGPA…APGS, and AAAQ…NQEM. Lysine 108 is covalently cross-linked (Glycyl lysine isopeptide (Lys-Gly) (interchain with G-Cter in SUMO)). The segment covering 143 to 162 has biased composition (pro residues); the sequence is PTPPASPEPPRRSPAPPAPG. A compositionally biased stretch (basic and acidic residues) spans 164 to 188; that stretch reads ARDKAAGKRGPDRGSPEYRQRRERN. The bZIP domain maps to 178 to 241; sequence SPEYRQRRER…AGLRRFFKQL (64 aa). A basic motif region spans residues 182 to 209; it reads RQRRERNNIAVRKSRDKAKRRNQEMQQK. A leucine-zipper region spans residues 213–241; the sequence is LSAENEKLQQRVEQLTRDLAGLRRFFKQL.

This sequence belongs to the bZIP family. C/EBP subfamily. Binds DNA as a homodimer and as a heterodimer. Can form stable heterodimers with CEBPB. Can form stable heterodimers with CEBPA and CEBPE. Directly interacts with SPI1/PU.1; this interaction does not affect DNA-binding properties of each partner. Interacts with PRDM16.

The protein resides in the nucleus. Its function is as follows. Transcription activator that recognizes two different DNA motifs: the CCAAT homology common to many promoters and the enhanced core homology common to many enhancers. Important transcription factor regulating the expression of genes involved in immune and inflammatory responses. Transcriptional activator that enhances IL6 transcription alone and as heterodimer with CEBPB. In Bos taurus (Bovine), this protein is CCAAT/enhancer-binding protein delta (CEBPD).